Here is a 201-residue protein sequence, read N- to C-terminus: Small ribosomal subunit protein uS4c (201 aa).

The disordered stretch occupies residues 15–44 (LGALPGLTNKRPRAGSDLRNQSRSGKKSQY). The S4 RNA-binding domain maps to 89-150 (MRLDNILFRL…EQKSKVLIQN (62 aa)).

It belongs to the universal ribosomal protein uS4 family. In terms of assembly, part of the 30S ribosomal subunit. Contacts protein S5. The interaction surface between S4 and S5 is involved in control of translational fidelity.

The protein resides in the plastid. It is found in the chloroplast. Its function is as follows. One of the primary rRNA binding proteins, it binds directly to 16S rRNA where it nucleates assembly of the body of the 30S subunit. Functionally, with S5 and S12 plays an important role in translational accuracy. The protein is Small ribosomal subunit protein uS4c (rps4) of Lactuca sativa (Garden lettuce).